The following is a 372-amino-acid chain: NAD(P)H-quinone oxidoreductase subunit 1 (372 aa).

Transmembrane regions (helical) follow at residues 27–47, 97–117, 128–148, 176–196, 204–224, 266–286, 308–328, and 347–367; these read IIWL…GVLV, ILFT…WLIV, VGIG…GLLM, LALS…IDIV, ILSW…ICAL, ILSA…PIPV, SIGI…AILL, and FLLP…LAFP.

This sequence belongs to the complex I subunit 1 family. As to quaternary structure, NDH-1 is composed of at least 11 different subunits.

The protein localises to the cellular thylakoid membrane. It carries out the reaction a plastoquinone + NADH + (n+1) H(+)(in) = a plastoquinol + NAD(+) + n H(+)(out). It catalyses the reaction a plastoquinone + NADPH + (n+1) H(+)(in) = a plastoquinol + NADP(+) + n H(+)(out). In terms of biological role, NDH-1 shuttles electrons from an unknown electron donor, via FMN and iron-sulfur (Fe-S) centers, to quinones in the respiratory and/or the photosynthetic chain. The immediate electron acceptor for the enzyme in this species is believed to be plastoquinone. Couples the redox reaction to proton translocation, and thus conserves the redox energy in a proton gradient. This chain is NAD(P)H-quinone oxidoreductase subunit 1, found in Prochlorococcus marinus (strain MIT 9301).